The following is an 87-amino-acid chain: Putative regulatory protein GK1166 (87 aa).

This sequence belongs to the RemA family.

This chain is Putative regulatory protein GK1166, found in Geobacillus kaustophilus (strain HTA426).